The following is a 464-amino-acid chain: Argininosuccinate lyase (464 aa).

This sequence belongs to the lyase 1 family. Argininosuccinate lyase subfamily.

It is found in the cytoplasm. The catalysed reaction is 2-(N(omega)-L-arginino)succinate = fumarate + L-arginine. Its pathway is amino-acid biosynthesis; L-arginine biosynthesis; L-arginine from L-ornithine and carbamoyl phosphate: step 3/3. The chain is Argininosuccinate lyase from Crocosphaera subtropica (strain ATCC 51142 / BH68) (Cyanothece sp. (strain ATCC 51142)).